We begin with the raw amino-acid sequence, 352 residues long: Photosystem II D2 protein (352 aa).

Topologically, residues 1 to 31 are cytoplasmic; sequence MTIAVGRAPVERGWFDVLDDWLKRDRFVFIG. Residues 32–53 traverse the membrane as a helical segment; that stretch reads WSGLLLFPCAFMALGGWLTGTT. Over 54 to 108 the chain is Lumenal, thylakoid; the sequence is FVTSWYTHGLASSYLEGANFLTVAVSSPADAFGHSLLFLWGPEAQGNLTRWFQIG. The helical transmembrane segment at 109-131 threads the bilayer; it reads GLWPFVALHGAFGLIGFMLRQFE. His117 lines the chlorophyll a pocket. Gln129 lines the pheophytin a pocket. Over 132 to 140 the chain is Cytoplasmic; that stretch reads ISRLVGIRP. A helical transmembrane segment spans residues 141–162; it reads YNAIAFSGPIAVFVSVFLMYPL. Position 142 (Asn142) interacts with pheophytin a. Topologically, residues 163–190 are lumenal, thylakoid; the sequence is GQSSWFFAPSFGVAGIFRFILFLQGFHN. The helical transmembrane segment at 191 to 217 threads the bilayer; the sequence is WTLNPFHMMGVAGILGGALLCAIHGAT. His197 is a chlorophyll a binding site. The a plastoquinone site is built by His214 and Phe261. A Fe cation-binding site is contributed by His214. Topologically, residues 218-265 are cytoplasmic; sequence VENTLFEDGEDSNTFRAFEPTQAEETYSMVTANRFWSQIFGIAFSNKR. Residues 266-288 traverse the membrane as a helical segment; that stretch reads WLHFFMLFVPVTGLWMSSVGIVG. His268 serves as a coordination point for Fe cation. The Lumenal, thylakoid portion of the chain corresponds to 289-352; it reads LALNLRAYDF…EEVLPRGNAL (64 aa).

It belongs to the reaction center PufL/M/PsbA/D family. As to quaternary structure, PSII is composed of 1 copy each of membrane proteins PsbA, PsbB, PsbC, PsbD, PsbE, PsbF, PsbH, PsbI, PsbJ, PsbK, PsbL, PsbM, PsbT, PsbX, PsbY, PsbZ, Psb30/Ycf12, peripheral proteins PsbO, CyanoQ (PsbQ), PsbU, PsbV and a large number of cofactors. It forms dimeric complexes. The D1/D2 heterodimer binds P680, chlorophylls that are the primary electron donor of PSII, and subsequent electron acceptors. It shares a non-heme iron and each subunit binds pheophytin, quinone, additional chlorophylls, carotenoids and lipids. There is also a Cl(-1) ion associated with D1 and D2, which is required for oxygen evolution. The PSII complex binds additional chlorophylls, carotenoids and specific lipids. serves as cofactor.

It is found in the cellular thylakoid membrane. The catalysed reaction is 2 a plastoquinone + 4 hnu + 2 H2O = 2 a plastoquinol + O2. Its function is as follows. Photosystem II (PSII) is a light-driven water:plastoquinone oxidoreductase that uses light energy to abstract electrons from H(2)O, generating O(2) and a proton gradient subsequently used for ATP formation. It consists of a core antenna complex that captures photons, and an electron transfer chain that converts photonic excitation into a charge separation. The D1/D2 (PsbA/PsbD) reaction center heterodimer binds P680, the primary electron donor of PSII as well as several subsequent electron acceptors. D2 is needed for assembly of a stable PSII complex. In Synechocystis sp. (strain ATCC 27184 / PCC 6803 / Kazusa), this protein is Photosystem II D2 protein.